We begin with the raw amino-acid sequence, 942 residues long: Netrin receptor UNC5B-b (942 aa).

The N-terminal stretch at 1–30 (MYLSRIPGGAALAALLVALLLCCNFPPSIA) is a signal peptide. The Extracellular segment spans residues 31-380 (GIEYSDVLPD…LESTGDVALY (350 aa)). The Ig-like domain occupies 51 to 148 (PHFLLEPEDA…AGTTKSKRSY (98 aa)). Disulfide bonds link Cys72-Cys133, Cys84-Cys131, Cys177-Cys228, Cys261-Cys298, Cys265-Cys302, Cys276-Cys288, Cys317-Cys351, Cys321-Cys356, and Cys329-Cys341. The 96-residue stretch at 150 to 245 (RIAYLRKNFD…KRRSTTATVI (96 aa)) folds into the Ig-like C2-type domain. Asn225 carries an N-linked (GlcNAc...) asparagine glycan. TSP type-1 domains are found at residues 249–303 (NGGW…TMCP) and 305–357 (DGGW…GLCM). An N-linked (GlcNAc...) asparagine glycan is attached at Asn350. The helical transmembrane segment at 381-401 (AGLVVAIFIIIILLMAVGIVV) threads the bilayer. Topologically, residues 402–942 (YRRNCREFDT…MLVMATDGDC (541 aa)) are cytoplasmic. Residues 541–684 (NSVTGTFGSL…LGTYAFVGES (144 aa)) form the ZU5 domain. Positions 687-835 (RSAIKRLQLA…LEENVKSFDP (149 aa)) are UPA domain. The Death domain maps to 863–940 (ICNSLDAPNS…EMMLVMATDG (78 aa)).

It belongs to the unc-5 family. As to quaternary structure, interacts (via extracellular domain) with flrt3 (via extracellular domain). Interacts with rnd1.

The protein localises to the cell membrane. Plays a role in cell-cell adhesion during embryonic development. Receptor for netrin required for axon guidance. Mediates axon repulsion of neuronal growth cones in the developing nervous system upon ligand binding. This Xenopus laevis (African clawed frog) protein is Netrin receptor UNC5B-b.